Consider the following 375-residue polypeptide: Methylthioribose-1-phosphate isomerase (375 aa).

Catalysis depends on aspartate 257, which acts as the Proton donor.

This sequence belongs to the eIF-2B alpha/beta/delta subunits family. MtnA subfamily.

Its subcellular location is the cytoplasm. The protein resides in the nucleus. It carries out the reaction 5-(methylsulfanyl)-alpha-D-ribose 1-phosphate = 5-(methylsulfanyl)-D-ribulose 1-phosphate. It functions in the pathway amino-acid biosynthesis; L-methionine biosynthesis via salvage pathway; L-methionine from S-methyl-5-thio-alpha-D-ribose 1-phosphate: step 1/6. Its function is as follows. Catalyzes the interconversion of methylthioribose-1-phosphate (MTR-1-P) into methylthioribulose-1-phosphate (MTRu-1-P). This Leishmania major protein is Methylthioribose-1-phosphate isomerase.